A 332-amino-acid polypeptide reads, in one-letter code: Palmitoyltransferase PFA3 (332 aa).

Residues 1–13 (MNLVNNFSKLFPR) are Cytoplasmic-facing. A helical membrane pass occupies residues 14–34 (CLTTGLYLWSLYAIVVCIHVI). The Lumenal portion of the chain corresponds to 35-37 (RAR). Residues 38–58 (VVLPLVFTIAMVALYTYAKLI) traverse the membrane as a helical segment. Over 59 to 147 (YVGPGTTKEY…AGCVGYRNQK (89 aa)) the chain is Cytoplasmic. A DHHC domain is found at 104-154 (RVCKSCSSWKPDRCHHCSTCNVCVLKMDHHCPWFAGCVGYRNQKFFIQFLI). The helical transmembrane segment at 148-168 (FFIQFLIYCTVYSILVLILSS) threads the bilayer. Residues 169 to 188 (MEIYTWFKGEFFEVELINFT) are Lumenal-facing. Residues 189–209 (LLSLWLLALVVSISITIFTVF) traverse the membrane as a helical segment. Residues 210 to 332 (SISQVCQNQT…SLDVDRSNFV (123 aa)) are Cytoplasmic-facing.

This sequence belongs to the DHHC palmitoyltransferase family. PFA3 subfamily. Post-translationally, autopalmitoylated.

It localises to the vacuole membrane. The enzyme catalyses L-cysteinyl-[protein] + hexadecanoyl-CoA = S-hexadecanoyl-L-cysteinyl-[protein] + CoA. In terms of biological role, palmitoyltransferase specific for VAC8. Palmitoylates VAC8 at one or more of its N-terminal cysteine residues, which is required for its proper membrane localization. The polypeptide is Palmitoyltransferase PFA3 (PFA3) (Candida glabrata (strain ATCC 2001 / BCRC 20586 / JCM 3761 / NBRC 0622 / NRRL Y-65 / CBS 138) (Yeast)).